The chain runs to 61 residues: Large ribosomal subunit protein uL30 (61 aa).

This sequence belongs to the universal ribosomal protein uL30 family. Part of the 50S ribosomal subunit.

The polypeptide is Large ribosomal subunit protein uL30 (Shewanella halifaxensis (strain HAW-EB4)).